A 418-amino-acid chain; its full sequence is Gamma-glutamyl phosphate reductase (418 aa).

This sequence belongs to the gamma-glutamyl phosphate reductase family.

Its subcellular location is the cytoplasm. It catalyses the reaction L-glutamate 5-semialdehyde + phosphate + NADP(+) = L-glutamyl 5-phosphate + NADPH + H(+). It functions in the pathway amino-acid biosynthesis; L-proline biosynthesis; L-glutamate 5-semialdehyde from L-glutamate: step 2/2. Functionally, catalyzes the NADPH-dependent reduction of L-glutamate 5-phosphate into L-glutamate 5-semialdehyde and phosphate. The product spontaneously undergoes cyclization to form 1-pyrroline-5-carboxylate. This Pelodictyon phaeoclathratiforme (strain DSM 5477 / BU-1) protein is Gamma-glutamyl phosphate reductase.